Reading from the N-terminus, the 269-residue chain is Formamidopyrimidine-DNA glycosylase (269 aa).

Catalysis depends on proline 2, which acts as the Schiff-base intermediate with DNA. Glutamate 3 functions as the Proton donor in the catalytic mechanism. Catalysis depends on lysine 57, which acts as the Proton donor; for beta-elimination activity. The DNA site is built by histidine 90, arginine 109, and lysine 150. Residues 235–269 (QVYGRGGEPCRVCGTPIQMAKHGQRSTFFCPACQH) form an FPG-type zinc finger. The Proton donor; for delta-elimination activity role is filled by arginine 259.

It belongs to the FPG family. In terms of assembly, monomer. Requires Zn(2+) as cofactor.

The enzyme catalyses Hydrolysis of DNA containing ring-opened 7-methylguanine residues, releasing 2,6-diamino-4-hydroxy-5-(N-methyl)formamidopyrimidine.. It carries out the reaction 2'-deoxyribonucleotide-(2'-deoxyribose 5'-phosphate)-2'-deoxyribonucleotide-DNA = a 3'-end 2'-deoxyribonucleotide-(2,3-dehydro-2,3-deoxyribose 5'-phosphate)-DNA + a 5'-end 5'-phospho-2'-deoxyribonucleoside-DNA + H(+). Functionally, involved in base excision repair of DNA damaged by oxidation or by mutagenic agents. Acts as a DNA glycosylase that recognizes and removes damaged bases. Has a preference for oxidized purines, such as 7,8-dihydro-8-oxoguanine (8-oxoG). Has AP (apurinic/apyrimidinic) lyase activity and introduces nicks in the DNA strand. Cleaves the DNA backbone by beta-delta elimination to generate a single-strand break at the site of the removed base with both 3'- and 5'-phosphates. This chain is Formamidopyrimidine-DNA glycosylase, found in Sodalis glossinidius (strain morsitans).